Here is a 435-residue protein sequence, read N- to C-terminus: Probable exopolygalacturonase B (435 aa).

A signal peptide spans 1–15 (MKFFLATLFASAVSS). 3 N-linked (GlcNAc...) asparagine glycosylation sites follow: Asn59, Asn184, and Asn224. 5 PbH1 repeats span residues 208–239 (SKDV…DSLN), 240–261 (VDGL…SPKP), 262–283 (NTTN…SMGS), 294–315 (IEHA…RLKA), and 326–347 (INNI…VLDQ). Asp254 functions as the Proton donor in the catalytic mechanism. A disulfide bridge links Cys256 with Cys273. Residues Asn262 and Asn274 are each glycosylated (N-linked (GlcNAc...) asparagine). Residue His277 is part of the active site. Residues Asn301, Asn328, Asn365, and Asn373 are each glycosylated (N-linked (GlcNAc...) asparagine). Residues 366 to 388 (VTNILFENISGTSSGKNGKVVAD) form a PbH1 6 repeat. A disulfide bridge links Cys391 with Cys397. Residue Asn406 is glycosylated (N-linked (GlcNAc...) asparagine).

Belongs to the glycosyl hydrolase 28 family.

Its subcellular location is the secreted. It carries out the reaction [(1-&gt;4)-alpha-D-galacturonosyl](n) + H2O = alpha-D-galacturonate + [(1-&gt;4)-alpha-D-galacturonosyl](n-1). Functionally, specific in hydrolyzing the terminal glycosidic bond of polygalacturonic acid and oligogalacturonates. This Aspergillus oryzae (strain ATCC 42149 / RIB 40) (Yellow koji mold) protein is Probable exopolygalacturonase B (pgxB).